Here is a 214-residue protein sequence, read N- to C-terminus: Octanoyltransferase (214 aa).

The 179-residue stretch at 36 to 214 (GRESEMVWLL…QQKFDTIFLQ (179 aa)) folds into the BPL/LPL catalytic domain. Substrate is bound by residues 75–82 (RGGKYSYH), 147–149 (AFG), and 160–162 (GFS). C178 serves as the catalytic Acyl-thioester intermediate.

The protein belongs to the LipB family.

It localises to the cytoplasm. It carries out the reaction octanoyl-[ACP] + L-lysyl-[protein] = N(6)-octanoyl-L-lysyl-[protein] + holo-[ACP] + H(+). It participates in protein modification; protein lipoylation via endogenous pathway; protein N(6)-(lipoyl)lysine from octanoyl-[acyl-carrier-protein]: step 1/2. Catalyzes the transfer of endogenously produced octanoic acid from octanoyl-acyl-carrier-protein onto the lipoyl domains of lipoate-dependent enzymes. Lipoyl-ACP can also act as a substrate although octanoyl-ACP is likely to be the physiological substrate. This Anaplasma marginale (strain Florida) protein is Octanoyltransferase.